Consider the following 472-residue polypeptide: Gamma-aminobutyric acid receptor subunit beta-2 (472 aa).

An N-terminal signal peptide occupies residues 1–23 (RVRKKDYFGIWSFPLIIAAVCAQ). Residues 24-239 (SVNDPSNMSL…LSLSFKLKRN (216 aa)) are Extracellular-facing. N-linked (GlcNAc...) asparagine glycans are attached at residues Asn-30 and Asn-102. Tyr-119 serves as a coordination point for histamine. Cysteines 158 and 172 form a disulfide. Residues 178–179 (SY) and Thr-224 each bind histamine. Tyr-179 and Thr-224 together coordinate 4-aminobutanoate. 3 consecutive transmembrane segments (helical) span residues 240–260 (IGYF…LSWV), 271–290 (ARVA…NTHL), and 309–329 (GCFV…YIFF). Residues 287 to 308 (NTHLRETLPKIPYVKAIDMYLM) form an etomidate binding; allosteric effector region. The Cytoplasmic segment spans residues 330–450 (GRGPQRQKKA…LTDVNAIDRW (121 aa)). Residue Tyr-401 is modified to Phosphotyrosine. The chain crosses the membrane as a helical span at residues 451 to 471 (SRIFFPVVFSFFNIVYWLYYV).

This sequence belongs to the ligand-gated ion channel (TC 1.A.9) family. Gamma-aminobutyric acid receptor (TC 1.A.9.5) subfamily. GABRB2 sub-subfamily. In terms of assembly, heteropentamer, formed by a combination of alpha (GABRA1-6), beta (GABRB1-3), gamma (GABRG1-3), delta (GABRD), epsilon (GABRE), rho (GABRR1-3), pi (GABRP) and theta (GABRQ) chains, each subunit exhibiting distinct physiological and pharmacological properties. Interacts with UBQLN1. May interact with KIF21B. Identified in a complex of 720 kDa composed of LHFPL4, NLGN2, GABRA1, GABRB2, GABRG2 and GABRB3. Post-translationally, glycosylated.

The protein localises to the postsynaptic cell membrane. It localises to the cell membrane. Its subcellular location is the cytoplasmic vesicle membrane. It carries out the reaction chloride(in) = chloride(out). Allosterically activated by benzodiazepines. Allosterically activated by the anesthetic etomidate. Inhibited by the antagonist bicuculline. Potentiated by histamine. Its function is as follows. Beta subunit of the heteropentameric ligand-gated chloride channel gated by gamma-aminobutyric acid (GABA), a major inhibitory neurotransmitter in the brain. GABA-gated chloride channels, also named GABA(A) receptors (GABAAR), consist of five subunits arranged around a central pore and contain GABA active binding site(s) located at the alpha and beta subunit interface(s). When activated by GABA, GABAARs selectively allow the flow of chloride anions across the cell membrane down their electrochemical gradient. Chloride influx into the postsynaptic neuron following GABAAR opening decreases the neuron ability to generate a new action potential, thereby reducing nerve transmission. GABAARs containing alpha-1 and beta-2 or -3 subunits exhibit synaptogenic activity; the gamma-2 subunit being necessary but not sufficient to induce rapid synaptic contacts formation. Extrasynaptic beta-2 receptors contribute to the tonic GABAergic inhibition. Beta-containing GABAARs can simultaneously bind GABA and histamine where histamine binds at the interface of two neighboring beta subunits, which may be involved in the regulation of sleep and wakefulness. In Bos taurus (Bovine), this protein is Gamma-aminobutyric acid receptor subunit beta-2 (GABRB2).